A 123-amino-acid chain; its full sequence is D-ribose pyranase (123 aa).

Residue His20 is the Proton donor of the active site. Substrate-binding positions include Asp28, His90, and 112 to 114; that span reads YAN.

Belongs to the RbsD / FucU family. RbsD subfamily. Homodecamer.

It localises to the cytoplasm. The catalysed reaction is beta-D-ribopyranose = beta-D-ribofuranose. It participates in carbohydrate metabolism; D-ribose degradation; D-ribose 5-phosphate from beta-D-ribopyranose: step 1/2. Its function is as follows. Catalyzes the interconversion of beta-pyran and beta-furan forms of D-ribose. This is D-ribose pyranase from Corynebacterium glutamicum (strain R).